Here is a 129-residue protein sequence, read N- to C-terminus: Small ribosomal subunit protein uS9 (129 aa).

Belongs to the universal ribosomal protein uS9 family.

In Treponema pallidum (strain Nichols), this protein is Small ribosomal subunit protein uS9 (rpsI).